The sequence spans 233 residues: Isoprenyl transferase (233 aa).

Residue aspartate 12 is part of the active site. Aspartate 12 lines the Mg(2+) pocket. Substrate contacts are provided by residues 13 to 16 (GNGR), tryptophan 17, arginine 25, histidine 29, and 57 to 59 (STE). The active-site Proton acceptor is asparagine 60. Substrate-binding positions include tryptophan 61, arginine 63, arginine 178, and 184–186 (RLS). Glutamate 197 contributes to the Mg(2+) binding site.

Belongs to the UPP synthase family. Homodimer. The cofactor is Mg(2+).

Catalyzes the condensation of isopentenyl diphosphate (IPP) with allylic pyrophosphates generating different type of terpenoids. This is Isoprenyl transferase from Thermotoga maritima (strain ATCC 43589 / DSM 3109 / JCM 10099 / NBRC 100826 / MSB8).